Reading from the N-terminus, the 152-residue chain is Protein SprT-like (152 aa).

The 141-residue stretch at 9-149 folds into the SprT-like domain; sequence LQKLTETISL…CGKCNGKLKE (141 aa). His-70 contributes to the Zn(2+) binding site. Residue Glu-71 is part of the active site. A Zn(2+)-binding site is contributed by His-74.

Belongs to the SprT family. Requires Zn(2+) as cofactor.

It localises to the cytoplasm. This chain is Protein SprT-like, found in Staphylococcus saprophyticus subsp. saprophyticus (strain ATCC 15305 / DSM 20229 / NCIMB 8711 / NCTC 7292 / S-41).